We begin with the raw amino-acid sequence, 459 residues long: Methionine aminopeptidase 2-1 (459 aa).

Over residues 1–12 the composition is skewed to basic and acidic residues; the sequence is MGSKSPEDHRQG. The segment at 1 to 79 is disordered; sequence MGSKSPEDHR…RKRNKKKSKK (79 aa). Residues 43-54 show a composition bias toward acidic residues; it reads GQDEDGDDDDDE. Positions 67–79 are enriched in basic residues; that stretch reads KKKRKRNKKKSKK. His210 lines the substrate pocket. The a divalent metal cation site is built by Asp231, Asp242, and His311. His319 provides a ligand contact to substrate. A divalent metal cation is bound by residues Glu344 and Glu440.

Belongs to the peptidase M24A family. Methionine aminopeptidase eukaryotic type 2 subfamily. It depends on Co(2+) as a cofactor. The cofactor is Zn(2+). Mn(2+) serves as cofactor. Fe(2+) is required as a cofactor.

It is found in the cytoplasm. It carries out the reaction Release of N-terminal amino acids, preferentially methionine, from peptides and arylamides.. Cotranslationally removes the N-terminal methionine from nascent proteins. The N-terminal methionine is often cleaved when the second residue in the primary sequence is small and uncharged (Met-Ala-, Cys, Gly, Pro, Ser, Thr, or Val). This Pyrenophora tritici-repentis (strain Pt-1C-BFP) (Wheat tan spot fungus) protein is Methionine aminopeptidase 2-1.